The sequence spans 498 residues: Guanosine-5'-triphosphate,3'-diphosphate pyrophosphatase (498 aa).

It belongs to the GppA/Ppx family. GppA subfamily.

It carries out the reaction guanosine 3'-diphosphate 5'-triphosphate + H2O = guanosine 3',5'-bis(diphosphate) + phosphate + H(+). Its pathway is purine metabolism; ppGpp biosynthesis; ppGpp from GTP: step 2/2. Functionally, catalyzes the conversion of pppGpp to ppGpp. Guanosine pentaphosphate (pppGpp) is a cytoplasmic signaling molecule which together with ppGpp controls the 'stringent response', an adaptive process that allows bacteria to respond to amino acid starvation, resulting in the coordinated regulation of numerous cellular activities. The sequence is that of Guanosine-5'-triphosphate,3'-diphosphate pyrophosphatase from Yersinia enterocolitica serotype O:8 / biotype 1B (strain NCTC 13174 / 8081).